The following is a 398-amino-acid chain: Metalloprotease MmpA (398 aa).

His22 provides a ligand contact to Zn(2+). Residue Glu23 is part of the active site. His26 is a Zn(2+) binding site. 3 helical membrane passes run 117–139, 316–338, and 362–381; these read FIAV…VILV, QFWL…IPVL, and AAGF…FAAW. Residues 130–203 form the PDZ domain; the sequence is AILVFAVILV…MPIDFAVERD (74 aa).

Belongs to the peptidase M50B family. Zn(2+) is required as a cofactor.

Its subcellular location is the cell inner membrane. In terms of biological role, involved in the regulated intramembrane proteolysis (RIP) of the short isoform of PodJ protein (PodJS), during the swarmer-to-stalked transition. The cleavage occurs near or within the single transmembrane of PodJS thereby releasing the N-terminal segment into the cytoplasm for subsequent degradation. It contributes to preserve asymmetry in the next cell cycle through sequential degradation. The polypeptide is Metalloprotease MmpA (mmpA) (Caulobacter vibrioides (strain ATCC 19089 / CIP 103742 / CB 15) (Caulobacter crescentus)).